The primary structure comprises 309 residues: Porphobilinogen deaminase (309 aa).

Residue Cys241 is modified to S-(dipyrrolylmethanemethyl)cysteine.

It belongs to the HMBS family. Monomer. It depends on dipyrromethane as a cofactor.

It catalyses the reaction 4 porphobilinogen + H2O = hydroxymethylbilane + 4 NH4(+). Its pathway is porphyrin-containing compound metabolism; protoporphyrin-IX biosynthesis; coproporphyrinogen-III from 5-aminolevulinate: step 2/4. In terms of biological role, tetrapolymerization of the monopyrrole PBG into the hydroxymethylbilane pre-uroporphyrinogen in several discrete steps. In Bacillus cereus (strain G9842), this protein is Porphobilinogen deaminase.